The chain runs to 212 residues: Ropporin-1 (212 aa).

The 32-residue stretch at 12–43 folds into the RIIa domain; the sequence is PELPELLKQFTKAAIRTQPPDLIQWAAEYFGA. A Phosphoserine modification is found at Ser-56. Positions 209–212 are interaction with RHPN1; sequence VRLE.

It belongs to the ropporin family. Homodimer. Interacts with AKAP3. May interact with SPA17. Interacts with RHPN1. Interacts with FSCB; the interaction increases upon spermatozoa capacitation conditions. Interacts with CFAP61. Sumoylated, sumoylation decreases upon spermatozoa capacitation conditions.

Its subcellular location is the cell projection. The protein resides in the cilium. It is found in the flagellum. Important for male fertility. With ROPN1L, involved in fibrous sheath integrity and sperm motility, plays a role in PKA-dependent signaling processes required for spermatozoa capacitation. In Rattus norvegicus (Rat), this protein is Ropporin-1 (Ropn1).